A 108-amino-acid chain; its full sequence is Putative bolA-like protein K11H12.1 (108 aa).

Residues 89–108 (SKWDGQKQEDSPTCRGGFGK) are disordered.

This sequence belongs to the BolA/IbaG family.

The polypeptide is Putative bolA-like protein K11H12.1 (Caenorhabditis elegans).